The chain runs to 972 residues: Translation initiation factor IF-2 (972 aa).

Positions 48–63 (DHLRKSHGATDGDKRK) are enriched in basic and acidic residues. Disordered stretches follow at residues 48 to 85 (DHLR…KART) and 99 to 385 (RDDV…QAPT). Residues 105 to 114 (GAEQGQAQVA) are compositionally biased toward low complexity. Residues 121-181 (ELKRREEEAR…EEEAAAKRVA (61 aa)) are compositionally biased toward basic and acidic residues. The segment covering 182 to 205 (AEAAAAQQQAAAQQAAAAEQQEAA) has biased composition (low complexity). Residues 212–263 (DEARAAAERAAQREAAKKAEDAAREAADKARAEQEEISKRRAAAEAEARAIR) are compositionally biased toward basic and acidic residues. Positions 279–288 (PPKPVEPPKP) are enriched in pro residues. Low complexity predominate over residues 313–328 (PAGAAAPATTAPAGAG). The span at 357–370 (SSGGVDRGWRGGPK) shows a compositional bias: gly residues. Positions 472–641 (PRPPVVTVMG…LLQAEVLELK (170 aa)) constitute a tr-type G domain. A G1 region spans residues 481 to 488 (GHVDHGKT). Residue 481-488 (GHVDHGKT) coordinates GTP. The tract at residues 506 to 510 (GITQH) is G2. The interval 527 to 530 (DTPG) is G3. Residues 527-531 (DTPGH) and 581-584 (NKID) contribute to the GTP site. The segment at 581–584 (NKID) is G4. The interval 617–619 (SAK) is G5.

The protein belongs to the TRAFAC class translation factor GTPase superfamily. Classic translation factor GTPase family. IF-2 subfamily.

The protein resides in the cytoplasm. One of the essential components for the initiation of protein synthesis. Protects formylmethionyl-tRNA from spontaneous hydrolysis and promotes its binding to the 30S ribosomal subunits. Also involved in the hydrolysis of GTP during the formation of the 70S ribosomal complex. In Burkholderia lata (strain ATCC 17760 / DSM 23089 / LMG 22485 / NCIMB 9086 / R18194 / 383), this protein is Translation initiation factor IF-2.